Consider the following 523-residue polypeptide: Sensory neuron membrane protein 1 (523 aa).

Residues 1-11 (MQLPKELKYAA) are Cytoplasmic-facing. The chain crosses the membrane as a helical span at residues 12-32 (IAGGVALFGLIFGWVLFPTIL). At 33-458 (KSQLKKEMAL…HQLFIPKRVV (426 aa)) the chain is on the extracellular side. Asn-67 and Asn-229 each carry an N-linked (GlcNAc...) asparagine glycan. Intrachain disulfides connect Cys-268–Cys-333, Cys-297–Cys-352, and Cys-335–Cys-341. Asn-440 carries an N-linked (GlcNAc...) asparagine glycan. A helical membrane pass occupies residues 459 to 479 (GVLRWWVVSFGSLGAVIGIVF). The Cytoplasmic segment spans residues 480–523 (HFRDHIMRLAVSGDTKVSKVTPEEPEQKDISVIGQAQEPAKVNI).

It belongs to the CD36 family. As to expression, detected in sensory neurons in the antenna.

The protein localises to the cell membrane. In terms of biological role, plays an olfactory role that is not restricted to pheromone sensitivity. The polypeptide is Sensory neuron membrane protein 1 (Heliothis virescens (Tobacco budworm moth)).